The following is a 178-amino-acid chain: Inorganic pyrophosphatase (178 aa).

Residues lysine 30, arginine 44, and tyrosine 56 each contribute to the substrate site. Mg(2+) contacts are provided by aspartate 66, aspartate 71, and aspartate 103. Tyrosine 140 contacts substrate.

This sequence belongs to the PPase family. Homohexamer. The cofactor is Mg(2+).

The protein resides in the cytoplasm. It carries out the reaction diphosphate + H2O = 2 phosphate + H(+). Functionally, catalyzes the hydrolysis of inorganic pyrophosphate (PPi) forming two phosphate ions. The protein is Inorganic pyrophosphatase of Thermococcus kodakarensis (strain ATCC BAA-918 / JCM 12380 / KOD1) (Pyrococcus kodakaraensis (strain KOD1)).